Reading from the N-terminus, the 153-residue chain is Large ribosomal subunit protein bL9 (153 aa).

The protein belongs to the bacterial ribosomal protein bL9 family.

Its function is as follows. Binds to the 23S rRNA. The polypeptide is Large ribosomal subunit protein bL9 (Koribacter versatilis (strain Ellin345)).